Here is a 330-residue protein sequence, read N- to C-terminus: tRNA U34 carboxymethyltransferase (330 aa).

Carboxy-S-adenosyl-L-methionine is bound by residues lysine 91, tryptophan 105, lysine 110, glycine 130, 152–154 (DPS), 181–182 (IE), methionine 196, tyrosine 200, and arginine 315.

It belongs to the class I-like SAM-binding methyltransferase superfamily. CmoB family. In terms of assembly, homotetramer.

The enzyme catalyses carboxy-S-adenosyl-L-methionine + 5-hydroxyuridine(34) in tRNA = 5-carboxymethoxyuridine(34) in tRNA + S-adenosyl-L-homocysteine + H(+). Its function is as follows. Catalyzes carboxymethyl transfer from carboxy-S-adenosyl-L-methionine (Cx-SAM) to 5-hydroxyuridine (ho5U) to form 5-carboxymethoxyuridine (cmo5U) at position 34 in tRNAs. In Shewanella piezotolerans (strain WP3 / JCM 13877), this protein is tRNA U34 carboxymethyltransferase.